A 666-amino-acid polypeptide reads, in one-letter code: tRNA 5-methylaminomethyl-2-thiouridine biosynthesis bifunctional protein MnmC (666 aa).

The tract at residues 1-245 (MKQYAIQPAN…KREMLCGVMA (245 aa)) is tRNA (mnm(5)s(2)U34)-methyltransferase. Residues 270-666 (IGGGIASALL…RKLLKGKAVK (397 aa)) are FAD-dependent cmnm(5)s(2)U34 oxidoreductase.

This sequence in the N-terminal section; belongs to the methyltransferase superfamily. tRNA (mnm(5)s(2)U34)-methyltransferase family. The protein in the C-terminal section; belongs to the DAO family. The cofactor is FAD.

It is found in the cytoplasm. The catalysed reaction is 5-aminomethyl-2-thiouridine(34) in tRNA + S-adenosyl-L-methionine = 5-methylaminomethyl-2-thiouridine(34) in tRNA + S-adenosyl-L-homocysteine + H(+). Catalyzes the last two steps in the biosynthesis of 5-methylaminomethyl-2-thiouridine (mnm(5)s(2)U) at the wobble position (U34) in tRNA. Catalyzes the FAD-dependent demodification of cmnm(5)s(2)U34 to nm(5)s(2)U34, followed by the transfer of a methyl group from S-adenosyl-L-methionine to nm(5)s(2)U34, to form mnm(5)s(2)U34. The sequence is that of tRNA 5-methylaminomethyl-2-thiouridine biosynthesis bifunctional protein MnmC from Citrobacter koseri (strain ATCC BAA-895 / CDC 4225-83 / SGSC4696).